The chain runs to 304 residues: Oxygen-dependent coproporphyrinogen-III oxidase (304 aa).

A substrate-binding site is contributed by Ser-94. A divalent metal cation contacts are provided by His-98 and His-108. His-108 functions as the Proton donor in the catalytic mechanism. 110–112 is a substrate binding site; it reads NVR. His-147 and His-177 together coordinate a divalent metal cation. The segment at 242–277 is important for dimerization; it reads YVEFNLVYDRGTLFGLQTGGRTESILMSMPPLVRWQ. 260–262 serves as a coordination point for substrate; it reads GGR.

It belongs to the aerobic coproporphyrinogen-III oxidase family. Homodimer. A divalent metal cation is required as a cofactor.

It is found in the cytoplasm. It catalyses the reaction coproporphyrinogen III + O2 + 2 H(+) = protoporphyrinogen IX + 2 CO2 + 2 H2O. It participates in porphyrin-containing compound metabolism; protoporphyrin-IX biosynthesis; protoporphyrinogen-IX from coproporphyrinogen-III (O2 route): step 1/1. Functionally, involved in the heme biosynthesis. Catalyzes the aerobic oxidative decarboxylation of propionate groups of rings A and B of coproporphyrinogen-III to yield the vinyl groups in protoporphyrinogen-IX. This Shewanella amazonensis (strain ATCC BAA-1098 / SB2B) protein is Oxygen-dependent coproporphyrinogen-III oxidase.